A 206-amino-acid polypeptide reads, in one-letter code: SOSS complex subunit B2 (206 aa).

A DNA-binding region (OB) is located at residues 26–89 (IVLEIGRVTK…SMWKGCLTLY (64 aa)). Disordered stretches follow at residues 114 to 146 (EPNP…GTGT) and 166 to 206 (SYAG…AFKR). Over residues 181 to 196 (LPGTANNQTVMTTISN) the composition is skewed to polar residues.

Belongs to the SOSS-B family. SOSS-B2 subfamily. In terms of assembly, component of the SOSS complex, composed of SOSS-B (SOSS-B1/NABP2 or SOSS-B2/NABP1), SOSS-A/INTS3 and SOSS-C/INIP. SOSS complexes containing SOSS-B1/NABP2 are more abundant than complexes containing SOSS-B2/NABP1.

The protein localises to the nucleus. Functionally, component of the SOSS complex, a multiprotein complex that functions downstream of the MRN complex to promote DNA repair and G2/M checkpoint. In the SOSS complex, acts as a sensor of single-stranded DNA that binds to single-stranded DNA, in particular to polypyrimidines. The SOSS complex associates with DNA lesions and influences diverse endpoints in the cellular DNA damage response including cell-cycle checkpoint activation, recombinational repair and maintenance of genomic stability. Required for efficient homologous recombination-dependent repair of double-strand breaks (DSBs) and ATM-dependent signaling pathways. This is SOSS complex subunit B2 (NABP1) from Bos taurus (Bovine).